The following is a 161-amino-acid chain: Suppressor of kinetochore protein 1 (161 aa).

Positions 102–161 (VLASNYLDIKPLLDTGCKTVANMIRGKSPEDIRKTFNIPNDFTPEEEEQIRKENEWAEDR) are interaction with the F-box domain of F-box proteins.

The protein belongs to the SKP1 family. As to quaternary structure, essential component of the E3 ubiquitin ligase Skp1-Cullin-1-F-box (SCF) complex. Interacts with cul1, fbh1, mcs2, pip1, pof1, pof2, pof3, pof4, pof5, pof6, pof7, pof8, pof9, pof10, pof11, pof12, pof13, pof14, pop1, pop2 and tfb3. Forms a complex with pof6 and sip1. Component of the RAVE complex composed of rav1, rav2 and skp1.

The protein localises to the cytoplasm. It localises to the nucleus. Functionally, required for cig2 degradation in the G2 and M phases of the cell cycle. Together with pof6, essential for septum processing and cell separation. Involved in mitotic progression, essential for the execution of anaphase B; required for coordinated structural alterations of mitotic spindles and segregation of nuclear membrane structures at anaphase. Involved in the DNA damage checkpoint pathway and maintenance of genome integrity. Component of the RAVE complex which is required for stable assembly of the vacuolar ATPase complex V-ATPase. In Schizosaccharomyces pombe (strain 972 / ATCC 24843) (Fission yeast), this protein is Suppressor of kinetochore protein 1.